The primary structure comprises 785 residues: Probable cationic amino acid transporter (785 aa).

A run of 15 helical transmembrane segments spans residues Leu-58 to Val-78, Ala-83 to Val-103, Ala-119 to Leu-141, Tyr-187 to Val-207, Val-216 to Val-236, Trp-251 to Ile-271, Ala-291 to Val-311, Ile-337 to Met-357, Val-360 to Tyr-380, Pro-384 to Leu-404, Leu-407 to Leu-427, Cys-568 to Gly-588, Trp-596 to Ile-616, Met-628 to Leu-648, and Trp-655 to Trp-675. Residues Asp-715–Glu-785 are disordered. Low complexity predominate over residues Gln-727–Ser-740. Positions Val-775–Glu-785 are enriched in acidic residues.

The protein belongs to the amino acid-polyamine-organocation (APC) superfamily.

The protein resides in the lysosome membrane. Its function is as follows. May be involved in arginine transport. The sequence is that of Probable cationic amino acid transporter (slc7a14a) from Danio rerio (Zebrafish).